The sequence spans 189 residues: MLPTSGSSANLYSWMYVSGRGNPSTPESVSELNHNHFLSPELQDKLDVMVSIYSCARNNNELEEIFQELSAFVSGLMDKRNSVFEVRNENTDEVVGALRAGMTIEDRDSYIRDLFFLHSLKVKIEESRQGKEDSKCKVYNLLCPHHSSELYGDLRAMKCLVEGCSDDFNPFDIIRVPDLTYNKGSLQCG.

The segment at 186-189 (LQCG) is interaction with host caspases.

In terms of assembly, monomer. Interacts (via C-terminus) with human CASP4, CASP8 and CASP9.

The protein resides in the secreted. It localises to the host cytoplasm. Its function is as follows. Effector protein that alters host cell physiology and promotes bacterial survival in host tissues. Inhibits the catalytic activity of human CASP4, CASP8 and CASP9, and thereby inhibits apoptosis of infected host cells. The protein is Effector protein NleF (nleF) of Escherichia coli O157:H7.